A 212-amino-acid polypeptide reads, in one-letter code: Thymidylate kinase (212 aa).

11-18 (GPDGAGKS) contributes to the ATP binding site.

It belongs to the thymidylate kinase family.

The catalysed reaction is dTMP + ATP = dTDP + ADP. Phosphorylation of dTMP to form dTDP in both de novo and salvage pathways of dTTP synthesis. This Streptococcus gordonii (strain Challis / ATCC 35105 / BCRC 15272 / CH1 / DL1 / V288) protein is Thymidylate kinase.